A 587-amino-acid polypeptide reads, in one-letter code: Integrator complex subunit 14 (587 aa).

Residues 3-113 (TLIALDASLS…NILQVVVFTD (111 aa)) form the VWFA domain. 2 disordered regions span residues 190-211 (KSSD…KSEL) and 304-331 (REKS…DTSN).

Belongs to the Integrator subunit 14 family. Belongs to the multiprotein complex Integrator, at least composed of IntS1, IntS2, IntS3, IntS4, omd/IntS5, IntS6, defl/IntS7, IntS8, IntS9, IntS10, IntS11, IntS12, asun/IntS13, IntS14 and IntS15. The core complex associates with protein phosphatase 2A subunits mts/PP2A and Pp2A-29B, to form the Integrator-PP2A (INTAC) complex.

The protein localises to the nucleus. In terms of biological role, component of the integrator complex, a multiprotein complex that terminates RNA polymerase II (Pol II) transcription in the promoter-proximal region of genes. The integrator complex provides a quality checkpoint during transcription elongation by driving premature transcription termination of transcripts that are unfavorably configured for transcriptional elongation: the complex terminates transcription by (1) catalyzing dephosphorylation of the C-terminal domain (CTD) of Pol II subunit Polr2A/Rbp1 and Spt5, and (2) degrading the exiting nascent RNA transcript via endonuclease activity. The integrator complex is also involved in the 3'-end processing of the U7 snRNA, and also the spliceosomal snRNAs U1, U2, U4 and U5. In Drosophila melanogaster (Fruit fly), this protein is Integrator complex subunit 14.